The following is a 1058-amino-acid chain: Carbamoyl phosphate synthase large chain (1058 aa).

Residues 1 to 401 are carboxyphosphate synthetic domain; it reads MPKRKDIQKI…SLLKACRSLE (401 aa). ATP is bound by residues Arg-129, Arg-169, Gly-175, Gly-176, Arg-208, Ile-210, Glu-215, Gly-241, Ile-242, His-243, Gln-284, and Glu-298. An ATP-grasp 1 domain is found at 133–327; the sequence is KQLMQELDQP…IAKLAAKIAV (195 aa). Mg(2+) contacts are provided by Gln-284, Glu-298, and Asn-300. Positions 284, 298, and 300 each coordinate Mn(2+). Positions 402-546 are oligomerization domain; it reads IGVCHNEMTS…YSTYELENES (145 aa). The interval 547–929 is carbamoyl phosphate synthetic domain; the sequence is VQSNKESILV…ALYKAFEANN (383 aa). The ATP-grasp 2 domain occupies 671 to 861; it reads EKALKELGIP…MAQIATKLIL (191 aa). ATP-binding residues include Arg-707, Ser-746, Ile-748, Glu-752, Gly-777, Val-778, His-779, Ser-780, Gln-820, and Glu-832. 3 residues coordinate Mg(2+): Gln-820, Glu-832, and Asn-834. Mn(2+) is bound by residues Gln-820, Glu-832, and Asn-834. The MGS-like domain occupies 930–1058; it reads SHLSEFGQIV…ESRCFNIEAI (129 aa). Positions 930-1058 are allosteric domain; sequence SHLSEFGQIV…ESRCFNIEAI (129 aa).

It belongs to the CarB family. In terms of assembly, composed of two chains; the small (or glutamine) chain promotes the hydrolysis of glutamine to ammonia, which is used by the large (or ammonia) chain to synthesize carbamoyl phosphate. Tetramer of heterodimers (alpha,beta)4. It depends on Mg(2+) as a cofactor. The cofactor is Mn(2+).

The enzyme catalyses hydrogencarbonate + L-glutamine + 2 ATP + H2O = carbamoyl phosphate + L-glutamate + 2 ADP + phosphate + 2 H(+). It catalyses the reaction hydrogencarbonate + NH4(+) + 2 ATP = carbamoyl phosphate + 2 ADP + phosphate + 2 H(+). It functions in the pathway amino-acid biosynthesis; L-arginine biosynthesis; carbamoyl phosphate from bicarbonate: step 1/1. Its pathway is pyrimidine metabolism; UMP biosynthesis via de novo pathway; (S)-dihydroorotate from bicarbonate: step 1/3. Its function is as follows. Large subunit of the glutamine-dependent carbamoyl phosphate synthetase (CPSase). CPSase catalyzes the formation of carbamoyl phosphate from the ammonia moiety of glutamine, carbonate, and phosphate donated by ATP, constituting the first step of 2 biosynthetic pathways, one leading to arginine and/or urea and the other to pyrimidine nucleotides. The large subunit (synthetase) binds the substrates ammonia (free or transferred from glutamine from the small subunit), hydrogencarbonate and ATP and carries out an ATP-coupled ligase reaction, activating hydrogencarbonate by forming carboxy phosphate which reacts with ammonia to form carbamoyl phosphate. This chain is Carbamoyl phosphate synthase large chain, found in Streptococcus pyogenes serotype M18 (strain MGAS8232).